The sequence spans 761 residues: T-box protein 1 (761 aa).

2 disordered regions span residues 1 to 85 and 167 to 210; these read MLGR…QPLT and QTDP…CSSP. Composition is skewed to polar residues over residues 37–61 and 167–179; these read DLQN…NQAG and QTDP…FPQA. Composition is skewed to low complexity over residues 180 to 191 and 198 to 210; these read SPSDLSTTSSQS and SSPS…CSSP. A DNA-binding region (T-box) is located at residues 287–456; it reads LWRKFHEHRT…HNPFAKGFRD (170 aa). Over residues 496 to 510 the composition is skewed to polar residues; that stretch reads TTGFPCQTNPTQRSN. Disordered stretches follow at residues 496–515, 545–612, and 637–687; these read TTGF…QHEG, SGDA…TPAH, and VCSS…LLTT. Positions 600-612 are enriched in basic and acidic residues; that stretch reads GCERSNEKHTPAH. The segment covering 637 to 646 has biased composition (polar residues); sequence VCSSDNSNPD. Over residues 656 to 687 the composition is skewed to low complexity; the sequence is SPAGSGSPSVTSGTSLFTSGSSAAPSPPLLTT.

Its subcellular location is the nucleus. Functionally, probable transcriptional regulator involved in developmental processes. This is T-box protein 1 (tbr1) from Patiria pectinifera (Starfish).